The chain runs to 359 residues: Guanine nucleotide-binding protein subunit alpha-11 (359 aa).

2 S-palmitoyl cysteine lipidation sites follow: Cys-9 and Cys-10. The G-alpha domain occupies 38–359 (RELKLLLLGT…QHNLKEYNLV (322 aa)). A G1 motif region spans residues 41-54 (KLLLLGTGESGKST). GTP-binding positions include 46-53 (GTGESGKS) and 180-183 (LRVR). Ser-53 lines the Mg(2+) pocket. Positions 178-186 (DVLRVRVPT) are G2 motif. Residue Thr-186 coordinates Mg(2+). Positions 201–210 (FRMVDVGGQR) are G3 motif. The G4 motif stretch occupies residues 270–277 (ILFLNKKD). Residues 274–277 (NKKD) and Ala-331 each bind GTP. A G5 motif region spans residues 329–334 (TCATDT).

The protein belongs to the G-alpha family. G(q) subfamily. In terms of assembly, g proteins are composed of 3 units; alpha, beta and gamma. The alpha chain contains the guanine nucleotide binding site.

The protein localises to the cell membrane. It is found in the cytoplasm. The enzyme catalyses GTP + H2O = GDP + phosphate + H(+). In terms of biological role, guanine nucleotide-binding proteins (G proteins) function as transducers downstream of G protein-coupled receptors (GPCRs) in numerous signaling cascades. The alpha chain contains the guanine nucleotide binding site and alternates between an active, GTP-bound state and an inactive, GDP-bound state. Signaling by an activated GPCR promotes GDP release and GTP binding. The alpha subunit has a low GTPase activity that converts bound GTP to GDP, thereby terminating the signal. Both GDP release and GTP hydrolysis are modulated by numerous regulatory proteins. Signaling is mediated via phospholipase C-beta-dependent inositol lipid hydrolysis for signal propagation: activates phospholipase C-beta: following GPCR activation, GNA11 activates PLC-beta (PLCB1, PLCB2, PLCB3 or PLCB4), leading to production of diacylglycerol (DAG) and inositol 1,4,5-trisphosphate (IP3). The protein is Guanine nucleotide-binding protein subunit alpha-11 (gna11) of Xenopus laevis (African clawed frog).